Reading from the N-terminus, the 123-residue chain is Snaclec GPIB-binding protein subunit beta (123 aa).

Disulfide bonds link C2–C13, C30–C119, and C96–C111. Positions 9–120 (YGGHCYKLFK…CTRLQYFVCE (112 aa)) constitute a C-type lectin domain.

Belongs to the snaclec family. As to quaternary structure, heterodimer of subunits alpha and beta; disulfide-linked. Expressed by the venom gland.

It localises to the secreted. Its function is as follows. Binds to platelet GPIb (subunit alpha) (GP1BA) and functions as a receptor blocker for vWF binding to GPIb. The platelet GPIb-binding site resides on the GPIB-BP subunit beta and not on the alpha subunit. At a final concentration of 104 nM totally abolishes vWF-dependent shear-induced platelet aggregation (SIPA) at a high shear stress, but had no effect on SIPA at a low shear stress. The sequence is that of Snaclec GPIB-binding protein subunit beta from Bothrops jararaca (Jararaca).